A 144-amino-acid chain; its full sequence is 3-hydroxyacyl-[acyl-carrier-protein] dehydratase FabZ (144 aa).

His51 is a catalytic residue.

This sequence belongs to the thioester dehydratase family. FabZ subfamily.

It is found in the cytoplasm. It catalyses the reaction a (3R)-hydroxyacyl-[ACP] = a (2E)-enoyl-[ACP] + H2O. Involved in unsaturated fatty acids biosynthesis. Catalyzes the dehydration of short chain beta-hydroxyacyl-ACPs and long chain saturated and unsaturated beta-hydroxyacyl-ACPs. The sequence is that of 3-hydroxyacyl-[acyl-carrier-protein] dehydratase FabZ from Lactococcus lactis subsp. cremoris (strain MG1363).